Reading from the N-terminus, the 1405-residue chain is DNA-directed RNA polymerase subunit beta' (1405 aa).

Cys-70, Cys-72, Cys-85, and Cys-88 together coordinate Zn(2+). Mg(2+) is bound by residues Asp-460, Asp-462, and Asp-464. Cys-814, Cys-888, Cys-895, and Cys-898 together coordinate Zn(2+).

This sequence belongs to the RNA polymerase beta' chain family. As to quaternary structure, the RNAP catalytic core consists of 2 alpha, 1 beta, 1 beta' and 1 omega subunit. When a sigma factor is associated with the core the holoenzyme is formed, which can initiate transcription. Mg(2+) serves as cofactor. Zn(2+) is required as a cofactor.

It carries out the reaction RNA(n) + a ribonucleoside 5'-triphosphate = RNA(n+1) + diphosphate. In terms of biological role, DNA-dependent RNA polymerase catalyzes the transcription of DNA into RNA using the four ribonucleoside triphosphates as substrates. This Shewanella sediminis (strain HAW-EB3) protein is DNA-directed RNA polymerase subunit beta'.